We begin with the raw amino-acid sequence, 108 residues long: UPF0102 protein Shewmr4_3685 (108 aa).

The protein belongs to the UPF0102 family.

The sequence is that of UPF0102 protein Shewmr4_3685 from Shewanella sp. (strain MR-4).